Here is a 338-residue protein sequence, read N- to C-terminus: Malate dehydrogenase, mitochondrial (338 aa).

The N-terminal 24 residues, 1 to 24 (MLSALARPASAALRRSFSTSAQNN), are a transit peptide targeting the mitochondrion. NAD(+) is bound by residues 31–37 (GASGGIG) and D57. S33 is a glycosylation site (O-linked (GlcNAc) serine). N6-acetyllysine; alternate is present on residues K78 and K91. An N6-succinyllysine; alternate mark is found at K78 and K91. Residues R104 and R110 each contribute to the substrate site. Residues N117 and 140–142 (IAN) contribute to the NAD(+) site. A substrate-binding site is contributed by N142. K165 carries the post-translational modification N6-acetyllysine. Residue R176 participates in substrate binding. Residue K185 is modified to N6-acetyllysine; alternate. K185 carries the N6-succinyllysine; alternate modification. The active-site Proton acceptor is H200. An N6-succinyllysine modification is found at K203. 2 positions are modified to N6-acetyllysine; alternate: K215 and K239. N6-succinyllysine; alternate occurs at positions 215 and 239. K239 is modified (N6-malonyllysine; alternate). S246 carries the post-translational modification Phosphoserine. M251 contributes to the NAD(+) binding site. Position 269 is an N6-succinyllysine (K269). Residues K296, K301, K307, K314, and K324 each carry the N6-acetyllysine; alternate modification. N6-succinyllysine; alternate occurs at positions 296, 301, 307, 314, and 324. An N6-malonyllysine; alternate modification is found at K307. Phosphoserine is present on S326. Residues K328, K329, and K335 each carry the N6-acetyllysine; alternate modification. The residue at position 328 (K328) is an N6-succinyllysine; alternate. The residue at position 329 (K329) is an N6-malonyllysine; alternate. N6-succinyllysine; alternate is present on K335.

It belongs to the LDH/MDH superfamily. MDH type 1 family. In terms of assembly, homodimer. In terms of processing, acetylation is enhanced by up to 67% after treatment either with trichostin A (TSA) or with nicotinamide (NAM) with the appearance of tri- and tetraacetylations. Glucose also increases acetylation by about 60%.

The protein resides in the mitochondrion matrix. The enzyme catalyses (S)-malate + NAD(+) = oxaloacetate + NADH + H(+). Its activity is regulated as follows. Enzyme activity is enhanced by acetylation. In Homo sapiens (Human), this protein is Malate dehydrogenase, mitochondrial (MDH2).